Consider the following 38-residue polypeptide: Photosystem II reaction center protein L (38 aa).

A helical membrane pass occupies residues 17-37; it reads SLYWGLLLIFVLAVLFSNYFF.

Belongs to the PsbL family. PSII is composed of 1 copy each of membrane proteins PsbA, PsbB, PsbC, PsbD, PsbE, PsbF, PsbH, PsbI, PsbJ, PsbK, PsbL, PsbM, PsbT, PsbX, PsbY, PsbZ, Psb30/Ycf12, at least 3 peripheral proteins of the oxygen-evolving complex and a large number of cofactors. It forms dimeric complexes.

Its subcellular location is the plastid. It is found in the chloroplast thylakoid membrane. In terms of biological role, one of the components of the core complex of photosystem II (PSII). PSII is a light-driven water:plastoquinone oxidoreductase that uses light energy to abstract electrons from H(2)O, generating O(2) and a proton gradient subsequently used for ATP formation. It consists of a core antenna complex that captures photons, and an electron transfer chain that converts photonic excitation into a charge separation. This subunit is found at the monomer-monomer interface and is required for correct PSII assembly and/or dimerization. The polypeptide is Photosystem II reaction center protein L (Oenothera argillicola (Appalachian evening primrose)).